The primary structure comprises 370 residues: Chorismate synthase (370 aa).

Arg-48 serves as a coordination point for NADP(+). FMN-binding positions include 125 to 127, 241 to 242, Gly-286, 301 to 305, and Arg-327; these read RSS, NA, and KPTSS.

Belongs to the chorismate synthase family. Homotetramer. The cofactor is FMNH2.

The catalysed reaction is 5-O-(1-carboxyvinyl)-3-phosphoshikimate = chorismate + phosphate. Its pathway is metabolic intermediate biosynthesis; chorismate biosynthesis; chorismate from D-erythrose 4-phosphate and phosphoenolpyruvate: step 7/7. Catalyzes the anti-1,4-elimination of the C-3 phosphate and the C-6 proR hydrogen from 5-enolpyruvylshikimate-3-phosphate (EPSP) to yield chorismate, which is the branch point compound that serves as the starting substrate for the three terminal pathways of aromatic amino acid biosynthesis. This reaction introduces a second double bond into the aromatic ring system. This chain is Chorismate synthase, found in Ruegeria sp. (strain TM1040) (Silicibacter sp.).